The sequence spans 338 residues: Methionine import ATP-binding protein MetN 2 (338 aa).

Residues Ile-2–Val-242 enclose the ABC transporter domain. Gly-39–Ser-46 contacts ATP.

This sequence belongs to the ABC transporter superfamily. Methionine importer (TC 3.A.1.24) family. In terms of assembly, the complex is composed of two ATP-binding proteins (MetN), two transmembrane proteins (MetI) and a solute-binding protein (MetQ).

The protein resides in the cell inner membrane. It catalyses the reaction L-methionine(out) + ATP + H2O = L-methionine(in) + ADP + phosphate + H(+). The enzyme catalyses D-methionine(out) + ATP + H2O = D-methionine(in) + ADP + phosphate + H(+). Its function is as follows. Part of the ABC transporter complex MetNIQ involved in methionine import. Responsible for energy coupling to the transport system. This is Methionine import ATP-binding protein MetN 2 from Salmonella typhi.